A 717-amino-acid polypeptide reads, in one-letter code: MDQKLSQLIEELTTSGESQLNAQKMKELKKICKSSEEQLSHAYRLLITQLTQGHAEIRLSAFQIVDELFTRSHQFRMLLVSDFQEFLELTLGTDSDRPLPPPREAAQRLRQAAMQAVEGWNEKFGQAYKKLALGYHFLKHTKKVDFRDINVRTVAERKREEEKQKHLDKIHRESADRAKREMEEMYDEIECCLTEVENCFKLLVPLDFVPCPEDKFFGEASSMTEGYAPCPLSPDLATPRESGLSGPQDEEQPCCSKDLVASAYHVGSVVGLKALPQTAMKDSSRDEDEPSDPDDFLRSHGLGSHKYTLDVEVPSDGLKVQENEDNLAVLHAARDSLKLIQNKFLPTVCSWVQRFTRAGTYSAHLKQAIDLKMELELALKKYEELNIEPGRGQRSRTEALEDSEDEDQDFVEVPEKEGYEPRIPDHLRAEYGLEPKAPLKTLEKGTAVCKLQERTRMRREEEASDPTSAAAQMLRLQDCLSSPSPSSTRVLPGPEEAQKQAERARAPIVPFGVDLCYWGQEQLTAGKILKSDSQHRFWKPSEVEEEVDSAHVSEMLHSRHITFSGTFEPVQHKCRALRPNGRLCERQDRLKCPFHGKIIPRDDKGQPLNPEDRAREQRQQLQRQQAHPDWQDPEFLKDVEAATGVDLGSSRSSKKGKGKKKKHPNLTDLRERTNTARARLEKKVFAKAAVQRVVAAMNQMDQKKHEKFANQFNYALK.

Residues 2–145 (DQKLSQLIEE…HFLKHTKKVD (144 aa)) form a VHS-like region. Residues 169–199 (KIHRESADRAKREMEEMYDEIECCLTEVENC) are a coiled coil. Disordered stretches follow at residues 231–253 (PLSP…EEQP), 277–301 (QTAM…RSHG), 389–418 (PGRG…EKEG), and 479–503 (CLSS…QAER). 3 positions are modified to phosphoserine: serine 284, serine 291, and serine 403. 2 stretches are compositionally biased toward acidic residues: residues 285-294 (RDEDEPSDPD) and 400-412 (LEDS…DFVE). Lysine 416 participates in a covalent cross-link: Glycyl lysine isopeptide (Lys-Gly) (interchain with G-Cter in ubiquitin). The span at 479 to 489 (CLSSPSPSSTR) shows a compositional bias: polar residues. The UVSSA-type zinc-finger motif lies at 571–598 (QHKCRALRPNGRLCERQDRLKCPFHGKI). The Zn(2+) site is built by cysteine 574, cysteine 584, cysteine 592, and histidine 595. A disordered region spans residues 595-672 (HGKIIPRDDK…HPNLTDLRER (78 aa)). Basic and acidic residues predominate over residues 599–618 (IPRDDKGQPLNPEDRAREQR). Over residues 652–664 (SSKKGKGKKKKHP) the composition is skewed to basic residues.

Belongs to the UVSSA family. In terms of assembly, interacts with the elongating form of RNA polymerase II (RNA pol IIo) during transcription stress. Interacts with the TFIIH complex during transcription stress. Interacts with ERCC6. Interacts with ERCC8. Interacts with USP7. In terms of processing, monoubiquitinated at Lys-416 in response to transcription stress; this promotes efficient transfer of TFIIH to stalled RNA polymerase II.

The protein localises to the chromosome. Its function is as follows. Factor involved in transcription-coupled nucleotide excision repair (TC-NER), a mechanism that rapidly removes RNA polymerase II-blocking lesions from the transcribed strand of active genes. Acts as a key adapter that promotes recruitment of factors involved in TC-NER. Facilitates the ubiquitination of the elongating form of RNA polymerase II (RNA pol IIo) at DNA damage sites, thereby promoting RNA pol IIo backtracking and access by the TC-NER machinery to lesion sites. Also promotes stabilization of ERCC6/CSB by recruiting deubiquitinating enzyme USP7 to TC-NER complexes, preventing UV-induced degradation of ERCC6 by the proteasome. Mediates the recruitment of the TFIIH complex and other factors that are required for nucleotide excision repair to RNA polymerase II. Also required to inactivate stalled RNA polymerase II by blocking the access of TCEA1/TFIIS, thereby preventing reactivation of RNA polymerase II. Not involved in processing oxidative damage. The protein is UV-stimulated scaffold protein A (Uvssa) of Mus musculus (Mouse).